Reading from the N-terminus, the 349-residue chain is Magnesium-protoporphyrin IX monomethyl ester [oxidative] cyclase (349 aa).

Positions 1–10 (MTATTATAPT) are enriched in low complexity. Residues 1–23 (MTATTATAPTMRGGGRNELPPHL) form a disordered region.

Belongs to the AcsF family. Fe cation serves as cofactor.

The catalysed reaction is Mg-protoporphyrin IX 13-monomethyl ester + 3 NADPH + 3 O2 + 2 H(+) = 3,8-divinyl protochlorophyllide a + 3 NADP(+) + 5 H2O. The protein operates within porphyrin-containing compound metabolism; chlorophyll biosynthesis (light-independent). Catalyzes the formation of the isocyclic ring in chlorophyll biosynthesis. Mediates the cyclase reaction, which results in the formation of divinylprotochlorophyllide (Pchlide) characteristic of all chlorophylls from magnesium-protoporphyrin IX 13-monomethyl ester (MgPMME). This Prochlorococcus marinus (strain MIT 9313) protein is Magnesium-protoporphyrin IX monomethyl ester [oxidative] cyclase.